A 543-amino-acid polypeptide reads, in one-letter code: Chaperonin GroEL (543 aa).

ATP contacts are provided by residues 29-32 (TLGP), 86-90 (DGTTT), Gly-413, 476-478 (NAA), and Asp-492.

This sequence belongs to the chaperonin (HSP60) family. In terms of assembly, forms a cylinder of 14 subunits composed of two heptameric rings stacked back-to-back. Interacts with the co-chaperonin GroES.

It localises to the cytoplasm. It catalyses the reaction ATP + H2O + a folded polypeptide = ADP + phosphate + an unfolded polypeptide.. Together with its co-chaperonin GroES, plays an essential role in assisting protein folding. The GroEL-GroES system forms a nano-cage that allows encapsulation of the non-native substrate proteins and provides a physical environment optimized to promote and accelerate protein folding. The sequence is that of Chaperonin GroEL from Streptococcus pyogenes serotype M18 (strain MGAS8232).